Here is a 294-residue protein sequence, read N- to C-terminus: tRNA-cytidine(32) 2-sulfurtransferase (294 aa).

The short motif at 58 to 63 (SGGKDS) is the PP-loop motif element. [4Fe-4S] cluster contacts are provided by Cys-133, Cys-136, and Cys-224.

Belongs to the TtcA family. Homodimer. It depends on Mg(2+) as a cofactor. [4Fe-4S] cluster is required as a cofactor.

The protein resides in the cytoplasm. The enzyme catalyses cytidine(32) in tRNA + S-sulfanyl-L-cysteinyl-[cysteine desulfurase] + AH2 + ATP = 2-thiocytidine(32) in tRNA + L-cysteinyl-[cysteine desulfurase] + A + AMP + diphosphate + H(+). It functions in the pathway tRNA modification. Catalyzes the ATP-dependent 2-thiolation of cytidine in position 32 of tRNA, to form 2-thiocytidine (s(2)C32). The sulfur atoms are provided by the cysteine/cysteine desulfurase (IscS) system. This Ruegeria pomeroyi (strain ATCC 700808 / DSM 15171 / DSS-3) (Silicibacter pomeroyi) protein is tRNA-cytidine(32) 2-sulfurtransferase.